Consider the following 264-residue polypeptide: Homeobox protein vent1 (264 aa).

Composition is skewed to basic and acidic residues over residues 16 to 26 (KEEATDGKDSM) and 44 to 59 (YAKEMPRKKDGQDVQE). The interval 16–140 (KEEATDGKDS…RLRTAFTPQQ (125 aa)) is disordered. Over residues 60 to 80 (HTTSFQCSLGEQVINRPSANP) the composition is skewed to polar residues. Residues 117-130 (TEQREKSPKSDLQR) are compositionally biased toward basic and acidic residues. Residues 129–188 (QRRLRTAFTPQQISKLEQAFNKQRYLGAPERKKLATSLQLSEIQVKTWFQNRRMKLKRQI) constitute a DNA-binding region (homeobox).

In terms of tissue distribution, expressed in the ventral marginal zone of gastrulae. At stage 11.5, also expressed in the ventral region of the animal cap (ectoderm). At the end of gastrulation, predominantly localized to the ventral and lateral regions of the closing slit blastopore. At early tail bud stage, expression is maintained only in the forming proctodeum.

Its subcellular location is the nucleus. Transcriptional repressor. Cooperates with vent2 in a ventral signaling pathway downstream of bmp4, which antagonizes the Spemann organizer and dorsal mesoderm formation, and leads to ventral mesoderm formation. Acts downstream of bmp4 to repress transcription of foxa4-B/XFD-1'. Binds to DNA with preference for the target sequence 5'-CTATT[T/C]G-3'. Also binds 5'-TGCATTTTG-3' at a lower frequency, and occasionally 5'-TTGATC-3'. Binds to the homeobox 2 (HBX2) repressor element in the promoter of the myf5 gene and represses myf5 transcription in the ventral domain. The polypeptide is Homeobox protein vent1 (vent1) (Xenopus laevis (African clawed frog)).